Reading from the N-terminus, the 285-residue chain is Guanylate kinase 2, chloroplastic/mitochondrial (285 aa).

Residues 1–19 show a composition bias toward low complexity; that stretch reads MLLTRRFSSALARSPLLPR. Residues 1–42 constitute a chloroplast and mitochondrion transit peptide; it reads MLLTRRFSSALARSPLLPRSLPPPRAVPATPPAPRPPPRRLM. The tract at residues 1–66 is disordered; that stretch reads MLLTRRFSSA…PPPPSGADKD (66 aa). Positions 20-36 are enriched in pro residues; that stretch reads SLPPPRAVPATPPAPRP. Over residues 40 to 50 the composition is skewed to low complexity; that stretch reads RLMSSSSSGWH. A Guanylate kinase-like domain is found at 91–272; it reads PMILVISGPS…AVKQVESIID (182 aa). 98–105 serves as a coordination point for ATP; sequence GPSGVGKD. Residues Arg130, Arg224, and Arg235 contribute to the active site. Residue Asn255 participates in ATP binding.

The protein belongs to the guanylate kinase family. Monomer.

Its subcellular location is the plastid. It is found in the chloroplast. The protein localises to the mitochondrion. It carries out the reaction GMP + ATP = GDP + ADP. In terms of biological role, essential for recycling GMP and indirectly, cGMP. Essential for chloroplast differentiation at early stage of leaf development. May not be involved in the synthesis and maintenance of the organellar DNA during leaf development. This chain is Guanylate kinase 2, chloroplastic/mitochondrial (V2), found in Oryza sativa subsp. japonica (Rice).